The primary structure comprises 97 residues: Protein S100-A10 (97 aa).

An N6-acetyllysine mark is found at Lys23, Lys28, Lys54, and Lys57. Residues 47 to 82 (KDPLAVDKIMKDLDQCRDGKVGFQSFLSLVAGLTIA) enclose the EF-hand domain. Positions 60–71 (DQCRDGKVGFQS) are ancestral calcium site.

It belongs to the S-100 family. In terms of assembly, heterotetramer containing 2 light chains of S100A10/p11 and 2 heavy chains of ANXA2/p36. Interacts with SCN10A. Interacts with TASOR.

Because S100A10 induces the dimerization of ANXA2/p36, it may function as a regulator of protein phosphorylation in that the ANXA2 monomer is the preferred target (in vitro) of tyrosine-specific kinase. This Mus musculus (Mouse) protein is Protein S100-A10 (S100a10).